The primary structure comprises 660 residues: MNTNTNTNTNISSSGNNIINTPTTNNNNKNNNNNNNNNNNSNNSNNNSSNNNNNNNNAVGVKTGKKVNLKVETPVQNNENSYSLTTSGTFKEGDLLINKKGLLIKGESPKNSSVNDRNKNKSLHSNLNPQLLASPTSSESMDFNQGFYNNNNNNNNNNNNNNLNNFNNLMNNGIDSPQLSGISISTPTSSHSFNNTFTNYYNNNNNYNNYNNNNNSNNNNNNYNNSNNNFNNFNNYNNYGNNNNFNNFNALQSSSNSSFDISSSGSSNNYLNNSANNHPHYDTNLSYDLKDLKIIRVLGRGAGGVVKLAYHETSGTYIALKVITLDIQENIRKQIILELKTLHKTSYPYIVSFYDAFYTEGSIFIALEFMELGSLSDIMKKTSTIPEPVLGKIAFQVLQGLVYLHRKLHLIHRDIKPSNILVNNKGEAKIADFGVSGQLQHTLSKAVTWVGTVTYMSPERISGRSYSFDSEIWSLGLTILECAIGKFPYGSNLPHQQQQPLQQQQQQQQQQQQPLQQQQQQQQQQQQPLQLQLQNLDINNSNNNIRNSNNNNNNNNNNNNNNNNNNNNNVLDISNGGLVDSGSSVPEGMGFWVLLDCIVKEEVPILPSTFSKEFRSFISECLQKEPTERPTASNLLNHEFVKKYQNFNVEKWTANLKQQQ.

Positions 1–57 (MNTNTNTNTNISSSGNNIINTPTTNNNNKNNNNNNNNNNNSNNSNNNSSNNNNNNNN) are enriched in low complexity. 3 disordered regions span residues 1 to 60 (MNTN…NAVG), 105 to 169 (KGES…FNNL), and 204 to 229 (NNNYNNYNNNNNSNNNNNNYNNSNNN). Lys-105 is covalently cross-linked (Glycyl lysine isopeptide (Lys-Gly) (interchain with G-Cter in SUMO)). A compositionally biased stretch (polar residues) spans 123–148 (LHSNLNPQLLASPTSSESMDFNQGFY). The segment covering 149–169 (NNNNNNNNNNNNNNLNNFNNL) has biased composition (low complexity). The 350-residue stretch at 292–641 (LKIIRVLGRG…ASNLLNHEFV (350 aa)) folds into the Protein kinase domain. Residues 298–306 (LGRGAGGVV) and Lys-321 each bind ATP. Asp-414 (proton acceptor) is an active-site residue. Disordered regions lie at residues 491–510 (SNLPHQQQQPLQQQQQQQQQ) and 539–573 (NNSNNNIRNSNNNNNNNNNNNNNNNNNNNNNVLDI). Low complexity-rich tracts occupy residues 496–510 (QQQQPLQQQQQQQQQ) and 539–569 (NNSNNNIRNSNNNNNNNNNNNNNNNNNNNNN).

This sequence belongs to the protein kinase superfamily. STE Ser/Thr protein kinase family. MAP kinase kinase subfamily. Interacts with mip1. Requires Mg(2+) as cofactor. In terms of processing, sumoylated and ubiquitinated in response to chemoattractant stimulation. Sumoylation is linked to kinase activation and results in translocation.

It localises to the cytoplasm. The protein resides in the nucleus. The catalysed reaction is L-seryl-[protein] + ATP = O-phospho-L-seryl-[protein] + ADP + H(+). The enzyme catalyses L-threonyl-[protein] + ATP = O-phospho-L-threonyl-[protein] + ADP + H(+). It catalyses the reaction L-tyrosyl-[protein] + ATP = O-phospho-L-tyrosyl-[protein] + ADP + H(+). In terms of biological role, required for cAMP-mediated activation of guanylyl cyclase activity and plays an essential role in aggregation, morphogenesis, and chemotaxis. Appears to act upstream of erk1 but not erk2. The protein is Dual specificity mitogen-activated protein kinase kinase 1 of Dictyostelium discoideum (Social amoeba).